Here is a 900-residue protein sequence, read N- to C-terminus: Sterol regulatory element-binding protein 1 (900 aa).

Residues 1 to 16 (MQSSIPSVSVSVASPA) are compositionally biased toward low complexity. Disordered stretches follow at residues 1–49 (MQSS…TKAS) and 206–263 (TTCK…PKKT). The tract at residues 1–440 (MQSSIPSVSV…FALPPFLMSP (440 aa)) is nuclear form of sre1; complements deletions of sre1 or scp1. Residues 1-442 (MQSSIPSVSV…LPPFLMSPFT (442 aa)) are Cytoplasmic-facing. Over residues 21–32 (TKASPDSKSPNS) the composition is skewed to polar residues. Positions 35 to 49 (AIPSSSPLASSTKAS) are enriched in low complexity. In terms of domain architecture, bHLH spans 260–332 (PKKTAHNMIE…AKATEYIRHL (73 aa)). The chain crosses the membrane as a helical span at residues 443–463 (GTVLFNMLKIGVVLLGLFYLL). Over 464 to 509 (HDNSLFKGFKGEKKSKVSTRSSMSPSSILFRKTVFEKYCLLDHSTS) the chain is Lumenal. Residues 510-530 (TISLFFGLLIFTLKSAYGYLT) traverse the membrane as a helical segment. Residues 531–900 (HRLSALYTSS…QEDLGYVSSA (370 aa)) lie on the Cytoplasmic side of the membrane. Phosphoserine occurs at positions 898 and 899.

Forms a tight complex with scp1, composed of 4 copies of scp1 and 4 copies of sre1, which protects sre1 precursor from degradation by the proteasome. In terms of processing, in low oxygen or sterol conditions, undergoes proteolytic cleavage by rhomboid-type protease rbd2 and is released as soluble transcription factor from the membrane. Processed form is phosphorylated.

Its subcellular location is the endoplasmic reticulum membrane. The protein localises to the nucleus. Precursor of the transcription factor form (Processed sterol regulatory element-binding protein 1), which is embedded in the endoplasmic reticulum membrane. Low oxygen or sterol conditions promote processing of this form, releasing the transcription factor form that translocates into the nucleus and activates transcription of genes required for adaptation to anaerobic growth. Functionally, transcriptional activator required for transcription of genes required for adaptation to anaerobic growth like those implicated in the nonrespiratory oxygen-consumptive biosynthetic pathways of sterol, heme, sphingolipid, and ubiquinone biosynthesis. May monitor oxygen levels through sterol synthesis steps which require oxygen. This chain is Sterol regulatory element-binding protein 1, found in Schizosaccharomyces pombe (strain 972 / ATCC 24843) (Fission yeast).